The chain runs to 401 residues: S-adenosylmethionine synthase (401 aa).

135 to 140 (GHGSGD) lines the ATP pocket.

Belongs to the AdoMet synthase 2 family. The cofactor is Mg(2+).

The catalysed reaction is L-methionine + ATP + H2O = S-adenosyl-L-methionine + phosphate + diphosphate. It functions in the pathway amino-acid biosynthesis; S-adenosyl-L-methionine biosynthesis; S-adenosyl-L-methionine from L-methionine: step 1/1. Functionally, catalyzes the formation of S-adenosylmethionine from methionine and ATP. This is S-adenosylmethionine synthase from Methanobrevibacter smithii (strain ATCC 35061 / DSM 861 / OCM 144 / PS).